Reading from the N-terminus, the 2037-residue chain is Protein SWOLLEN 1 (2037 aa).

Disordered stretches follow at residues 141–179, 454–487, 504–531, 567–637, 686–705, 837–893, 1011–1045, 1148–1197, 1729–1748, 1793–1812, and 1841–2037; these read VEPG…VKTD, REGG…NDRD, SVGY…TDKS, KTSS…KDAV, SLPI…DNTA, VGSP…SGGK, ATPE…PMIP, KHVQ…ESGP, SGET…KRPR, KSTR…TGLQ, and EAST…QSKK. Residues 147–157 show a composition bias toward basic and acidic residues; it reads SHERSLSKEET. Over residues 158–176 the composition is skewed to polar residues; that stretch reads VNLQPNPSVDDTPGESSVV. Residues 454–466 are compositionally biased toward basic and acidic residues; sequence REGGVSKKSDNEG. Residues 504–514 show a composition bias toward low complexity; the sequence is SVGYVSGGSTS. Over residues 515 to 526 the composition is skewed to polar residues; it reads ELAESESQSDSI. Residues 841–852 are compositionally biased toward low complexity; the sequence is STSSLDKTAAKS. Positions 853–865 are enriched in basic residues; the sequence is SKAKSERKPRRTS. Composition is skewed to polar residues over residues 1025-1041 and 1151-1171; these read ETPS…SGTN and QSGT…TSTV. The segment covering 1179–1189 has biased composition (basic residues); it reads TRVKSRKRKKM. Over residues 1794-1805 the composition is skewed to basic and acidic residues; sequence STREENKPDPLR. 3 stretches are compositionally biased toward polar residues: residues 1874–1886, 1942–1964, and 2013–2023; these read KTIS…TISR, EEQT…STNK, and LQTSMMTSKIP. A compositionally biased stretch (basic residues) spans 2028-2037; that stretch reads SKSHLSQSKK.

Interacts with importin alpha IMPA1 and IMPA2, required for nuclear-localized proteins import. Mainly expressed in seedlings, flower buds and stems, and, to a lower extent, in leaves and siliques.

It localises to the nucleus. In terms of biological role, under salt stress, appears to prevent the accumulation of reactive oxygen species (ROS) in roots and required for the maintenance of cell wall integrity (cellulose, pectin and lignin composition) by interacting with importin alpha (e.g. IMPA1 and IMPA2) and binding to the promoter of several ROS- and cell wall-related genes to regulate their expression. Necessary for cells organization in meristems and root elongation zones as well as for root elongation in high salinity, but not upon osmotic stress. The polypeptide is Protein SWOLLEN 1 (Arabidopsis thaliana (Mouse-ear cress)).